A 511-amino-acid chain; its full sequence is MKDHLIVFDTTLRDGEQSPGASMTRDEKLRIARQLERMRVDVIEAGFPAASNGDFESVRAIAEAIRESTVCGLARANEADIRRAGEAIAPAARGRIHTFIATSPIHMEMKLRMSPDQVVEQAVRAIGWAKEYTDDIEFSAEDAGRSEIDFLCRIFEAVIKAGAKTINVPDTVGYNVPEQYAHTIRTLIERVPGADKVVWSVHCHNDLGLAVANSLAAVMAGARQVECTLNGLGERAGNAALEELVMAVRTRQDVFPCDTRIDATQIVPASKLVSGVTGFPVQPNKAIVGANAFAHESGIHQDGVLKHRETYEIMRAEDVGWGANKLVLGKHSGRNAFRSRLQEIGIVVASEEHLNHAFARFKELADKKHEIFDEDIQALMSDEVVTPDQEHYRLVASRFHSETGETPRADLTLSVDGQETRTSAEGSGPVDAAFKAIEAIAGSGTELLLYSVNAITTGTDAQGEVTVRLAREDKVVNGQGADTDIIVASAKAYLNALNKLHSKLERLNPQL.

In terms of domain architecture, Pyruvate carboxyltransferase spans 5–267 (LIVFDTTLRD…DTRIDATQIV (263 aa)). Mn(2+)-binding residues include Asp-14, His-202, His-204, and Asn-238. Residues 393–511 (RLVASRFHSE…SKLERLNPQL (119 aa)) form a regulatory domain region.

This sequence belongs to the alpha-IPM synthase/homocitrate synthase family. LeuA type 1 subfamily. In terms of assembly, homodimer. The cofactor is Mn(2+).

The protein resides in the cytoplasm. It catalyses the reaction 3-methyl-2-oxobutanoate + acetyl-CoA + H2O = (2S)-2-isopropylmalate + CoA + H(+). It functions in the pathway amino-acid biosynthesis; L-leucine biosynthesis; L-leucine from 3-methyl-2-oxobutanoate: step 1/4. Functionally, catalyzes the condensation of the acetyl group of acetyl-CoA with 3-methyl-2-oxobutanoate (2-ketoisovalerate) to form 3-carboxy-3-hydroxy-4-methylpentanoate (2-isopropylmalate). This Aromatoleum aromaticum (strain DSM 19018 / LMG 30748 / EbN1) (Azoarcus sp. (strain EbN1)) protein is 2-isopropylmalate synthase.